An 83-amino-acid polypeptide reads, in one-letter code: High-potential iron-sulfur protein (83 aa).

C43, C46, C61, and C75 together coordinate [4Fe-4S] cluster.

This sequence belongs to the high-potential iron-sulfur protein (HiPIP) family. As to quaternary structure, homodimer.

It localises to the periplasm. Its function is as follows. Specific class of high-redox-potential 4Fe-4S ferredoxins. Functions in anaerobic electron transport in most purple and in some other photosynthetic bacteria and in at least one genus (Paracoccus) of halophilic, denitrifying bacteria. The protein is High-potential iron-sulfur protein of Isochromatium buderi (Chromatium buderi).